The chain runs to 304 residues: Secreted mono- and diacylglycerol lipase MDL4 (304 aa).

The signal sequence occupies residues Met1–Ala19. An intrachain disulfide couples Cys55 to Cys297. N-linked (GlcNAc...) asparagine glycans are attached at residues Asn102 and Asn161. Ser171 serves as the catalytic Nucleophile. Residue Asp228 is part of the active site. Asn253 is a glycosylation site (N-linked (GlcNAc...) asparagine). The active site involves His281.

This sequence belongs to the AB hydrolase superfamily. Lipase family. Class 3 subfamily.

Its subcellular location is the secreted. It localises to the cell wall. It carries out the reaction a monoacylglycerol + H2O = glycerol + a fatty acid + H(+). The enzyme catalyses a diacylglycerol + H2O = a monoacylglycerol + a fatty acid + H(+). Its function is as follows. Secreted lipase involved in Dandruff and seborrheic dermatitis (D/SD) probably via lipase-mediated breakdown of sebaceous lipids and release of irritating free fatty acids. Shows activity against monoglyceride and diglyceride substrates, but not triglyceride substrates and does not exhibit regio-selective production of diacylglycerols. Cleaves oleic acid from 1,2 isomers of diolein on both the 1 and the 2 position of the glycerol backbone, resulting mainly in free fatty acids but no monoolein is detected. Shows activity on monoolein and liberates mostly free fatty acids, but can also perform the reverse reaction and produce diolein. This Malassezia globosa (strain ATCC MYA-4612 / CBS 7966) (Dandruff-associated fungus) protein is Secreted mono- and diacylglycerol lipase MDL4.